A 157-amino-acid chain; its full sequence is Probable succinate transporter subunit YjjB (157 aa).

Helical transmembrane passes span 8-28 (LALA…AMVF), 50-70 (MILM…SMLV), 87-107 (VFTV…TAMI), and 129-149 (FLTA…PGLW).

The protein belongs to the ThrE exporter (TC 2.A.79) family. In terms of assembly, the transporter is composed of YjjB and YjjP.

Its subcellular location is the cell inner membrane. Its function is as follows. Involved in succinate export with YjjP. Both proteins are required for export. The polypeptide is Probable succinate transporter subunit YjjB (Escherichia coli O1:K1 / APEC).